The primary structure comprises 283 residues: Formamidopyrimidine-DNA glycosylase (283 aa).

P2 functions as the Schiff-base intermediate with DNA in the catalytic mechanism. Residue E3 is the Proton donor of the active site. The active-site Proton donor; for beta-elimination activity is K58. The DNA site is built by H100, R119, and R162. The segment at 247-283 (DVYGREGAPCKGEGCTGQIKRIVQSGRSSFYCAQCQR) adopts an FPG-type zinc-finger fold. The Proton donor; for delta-elimination activity role is filled by R273.

The protein belongs to the FPG family. As to quaternary structure, monomer. Requires Zn(2+) as cofactor.

The enzyme catalyses Hydrolysis of DNA containing ring-opened 7-methylguanine residues, releasing 2,6-diamino-4-hydroxy-5-(N-methyl)formamidopyrimidine.. It catalyses the reaction 2'-deoxyribonucleotide-(2'-deoxyribose 5'-phosphate)-2'-deoxyribonucleotide-DNA = a 3'-end 2'-deoxyribonucleotide-(2,3-dehydro-2,3-deoxyribose 5'-phosphate)-DNA + a 5'-end 5'-phospho-2'-deoxyribonucleoside-DNA + H(+). Functionally, involved in base excision repair of DNA damaged by oxidation or by mutagenic agents. Acts as a DNA glycosylase that recognizes and removes damaged bases. Has a preference for oxidized purines, such as 7,8-dihydro-8-oxoguanine (8-oxoG). Has AP (apurinic/apyrimidinic) lyase activity and introduces nicks in the DNA strand. Cleaves the DNA backbone by beta-delta elimination to generate a single-strand break at the site of the removed base with both 3'- and 5'-phosphates. In Roseobacter denitrificans (strain ATCC 33942 / OCh 114) (Erythrobacter sp. (strain OCh 114)), this protein is Formamidopyrimidine-DNA glycosylase.